Here is a 261-residue protein sequence, read N- to C-terminus: Cytochrome c oxidase subunit 3 (261 aa).

The Mitochondrial matrix portion of the chain corresponds to 1 to 15 (MTHQTHAYHMVNPSP). Residues 16 to 34 (WPLTGALSALLMTSGLIMW) traverse the membrane as a helical segment. The Mitochondrial intermembrane segment spans residues 35 to 40 (FHYNSM). A helical transmembrane segment spans residues 41 to 66 (SLLTLGFTTNLLTMYQWWRDVIREGT). Topologically, residues 67-72 (FQGHHT) are mitochondrial matrix. A helical membrane pass occupies residues 73–105 (PIVQKGLRYGMVLFIVSEVFFFAGFFWAFYHSS). Residues 106–128 (LAPTPELGGCWPPTGIIPLNPLE) are Mitochondrial intermembrane-facing. Residues 129–152 (VPLLNTSVLLASGVSITWAHHSLM) traverse the membrane as a helical segment. At 153–155 (EGN) the chain is on the mitochondrial matrix side. Residues 156-183 (RKHMLQALFITISLGVYFTLLQASEYYE) form a helical membrane-spanning segment. Residues 184-190 (TSFTISD) lie on the Mitochondrial intermembrane side of the membrane. A helical transmembrane segment spans residues 191–223 (GVYGSTFFMATGFHGLHVIIGSTFLIVCFLRQL). Residues 224-232 (YYHFTSNHH) are Mitochondrial matrix-facing. Residues 233–256 (FGFEAAAWYWHFVDVVWLFLYVSI) traverse the membrane as a helical segment. At 257 to 261 (YWWGS) the chain is on the mitochondrial intermembrane side.

Belongs to the cytochrome c oxidase subunit 3 family. As to quaternary structure, component of the cytochrome c oxidase (complex IV, CIV), a multisubunit enzyme composed of 14 subunits. The complex is composed of a catalytic core of 3 subunits MT-CO1, MT-CO2 and MT-CO3, encoded in the mitochondrial DNA, and 11 supernumerary subunits COX4I, COX5A, COX5B, COX6A, COX6B, COX6C, COX7A, COX7B, COX7C, COX8 and NDUFA4, which are encoded in the nuclear genome. The complex exists as a monomer or a dimer and forms supercomplexes (SCs) in the inner mitochondrial membrane with NADH-ubiquinone oxidoreductase (complex I, CI) and ubiquinol-cytochrome c oxidoreductase (cytochrome b-c1 complex, complex III, CIII), resulting in different assemblies (supercomplex SCI(1)III(2)IV(1) and megacomplex MCI(2)III(2)IV(2)).

The protein localises to the mitochondrion inner membrane. The enzyme catalyses 4 Fe(II)-[cytochrome c] + O2 + 8 H(+)(in) = 4 Fe(III)-[cytochrome c] + 2 H2O + 4 H(+)(out). Component of the cytochrome c oxidase, the last enzyme in the mitochondrial electron transport chain which drives oxidative phosphorylation. The respiratory chain contains 3 multisubunit complexes succinate dehydrogenase (complex II, CII), ubiquinol-cytochrome c oxidoreductase (cytochrome b-c1 complex, complex III, CIII) and cytochrome c oxidase (complex IV, CIV), that cooperate to transfer electrons derived from NADH and succinate to molecular oxygen, creating an electrochemical gradient over the inner membrane that drives transmembrane transport and the ATP synthase. Cytochrome c oxidase is the component of the respiratory chain that catalyzes the reduction of oxygen to water. Electrons originating from reduced cytochrome c in the intermembrane space (IMS) are transferred via the dinuclear copper A center (CU(A)) of subunit 2 and heme A of subunit 1 to the active site in subunit 1, a binuclear center (BNC) formed by heme A3 and copper B (CU(B)). The BNC reduces molecular oxygen to 2 water molecules using 4 electrons from cytochrome c in the IMS and 4 protons from the mitochondrial matrix. This is Cytochrome c oxidase subunit 3 (MT-CO3) from Canis lupus (Gray wolf).